The primary structure comprises 307 residues: Elongation factor Ts (307 aa).

The tract at residues 80-83 (TDFV) is involved in Mg(2+) ion dislocation from EF-Tu.

This sequence belongs to the EF-Ts family.

Its subcellular location is the cytoplasm. Functionally, associates with the EF-Tu.GDP complex and induces the exchange of GDP to GTP. It remains bound to the aminoacyl-tRNA.EF-Tu.GTP complex up to the GTP hydrolysis stage on the ribosome. This Methylobacterium sp. (strain 4-46) protein is Elongation factor Ts.